Reading from the N-terminus, the 573-residue chain is 3-oxosteroid 1-dehydrogenase (573 aa).

An FAD-binding site is contributed by 7–36; sequence DLIVVGSGAGACWAPIRAQEQGLKTLVVEK.

Belongs to the FAD-dependent oxidoreductase 2 family. 3-oxosteroid dehydrogenase subfamily. The cofactor is FAD.

The protein localises to the cell inner membrane. The enzyme catalyses a 3-oxosteroid + A = a 3-oxo-Delta(1)-steroid + AH2. Its pathway is lipid metabolism; steroid degradation. Dehydrogenates steroids by introducing a double bond in steroid ring A. In Comamonas testosteroni (Pseudomonas testosteroni), this protein is 3-oxosteroid 1-dehydrogenase.